A 262-amino-acid polypeptide reads, in one-letter code: Global transcriptional regulator CodY (262 aa).

The GAF domain stretch occupies residues 1 to 159 (MAHLLEKTRK…ASTVVGIQLL (159 aa)). Residues 207–226 (ASVIADRIGITRSVIVNALR) constitute a DNA-binding region (H-T-H motif).

It belongs to the CodY family.

It is found in the cytoplasm. In terms of biological role, DNA-binding global transcriptional regulator which is involved in the adaptive response to starvation and acts by directly or indirectly controlling the expression of numerous genes in response to nutrient availability. During rapid exponential growth, CodY is highly active and represses genes whose products allow adaptation to nutrient depletion. The polypeptide is Global transcriptional regulator CodY (Streptococcus pneumoniae serotype 4 (strain ATCC BAA-334 / TIGR4)).